Consider the following 298-residue polypeptide: Lipoyl synthase (298 aa).

Positions 40, 45, 51, 67, 71, 74, and 280 each coordinate [4Fe-4S] cluster. The region spanning Ala53–Ser269 is the Radical SAM core domain.

The protein belongs to the radical SAM superfamily. Lipoyl synthase family. Requires [4Fe-4S] cluster as cofactor.

It localises to the cytoplasm. It catalyses the reaction [[Fe-S] cluster scaffold protein carrying a second [4Fe-4S](2+) cluster] + N(6)-octanoyl-L-lysyl-[protein] + 2 oxidized [2Fe-2S]-[ferredoxin] + 2 S-adenosyl-L-methionine + 4 H(+) = [[Fe-S] cluster scaffold protein] + N(6)-[(R)-dihydrolipoyl]-L-lysyl-[protein] + 4 Fe(3+) + 2 hydrogen sulfide + 2 5'-deoxyadenosine + 2 L-methionine + 2 reduced [2Fe-2S]-[ferredoxin]. It functions in the pathway protein modification; protein lipoylation via endogenous pathway; protein N(6)-(lipoyl)lysine from octanoyl-[acyl-carrier-protein]. Catalyzes the radical-mediated insertion of two sulfur atoms into the C-6 and C-8 positions of the octanoyl moiety bound to the lipoyl domains of lipoate-dependent enzymes, thereby converting the octanoylated domains into lipoylated derivatives. This Bacillus cereus (strain ATCC 10987 / NRS 248) protein is Lipoyl synthase.